A 476-amino-acid polypeptide reads, in one-letter code: Trigger factor (476 aa).

Residues 174–261 (GDIAVVSFKG…LKDLKEKELP (88 aa)) enclose the PPIase FKBP-type domain. A disordered region spans residues 436-476 (KENTTKTSKTTKNSKTTKATKTTKTTKTTKTSKTQNKKEKK). Over residues 440-469 (TKTSKTTKNSKTTKATKTTKTTKTTKTSKT) the composition is skewed to low complexity.

Belongs to the FKBP-type PPIase family. Tig subfamily.

It localises to the cytoplasm. It catalyses the reaction [protein]-peptidylproline (omega=180) = [protein]-peptidylproline (omega=0). Its function is as follows. Involved in protein export. Acts as a chaperone by maintaining the newly synthesized protein in an open conformation. Functions as a peptidyl-prolyl cis-trans isomerase. The protein is Trigger factor of Prochlorococcus marinus (strain MIT 9215).